Here is a 480-residue protein sequence, read N- to C-terminus: G-protein coupled receptor seb-2 (480 aa).

Residues 1-222 lie on the Extracellular side of the membrane; it reads MNPSISTAGA…CMSNGDVEAR (222 aa). Asn-95 carries an N-linked (GlcNAc...) asparagine glycan. A helical membrane pass occupies residues 223 to 243; sequence ILAGLLTYSASVIFLIPAVFL. Over 244-261 the chain is Cytoplasmic; sequence LTLLRPIRCQPMFILHRH. Residues 262–282 form a helical membrane-spanning segment; sequence LLISCLLYGAFYLITVSLFVV. Residues 283-305 lie on the Extracellular side of the membrane; that stretch reads NDAPLSSQVFQNHLFCRLLFSIQ. The helical transmembrane segment at 306–328 threads the bilayer; sequence LRYLRLTNFTWMLAEAVYLWRLL. The Cytoplasmic segment spans residues 329-343; sequence HTAQHSEGETLRSYK. A helical membrane pass occupies residues 344 to 364; it reads VICWGVPGVITVVYIFVRSLN. Residues 365-386 lie on the Extracellular side of the membrane; it reads DDVGMCWIENSTVAWIEWMIIT. The helical transmembrane segment at 387-407 threads the bilayer; that stretch reads PSLLAMGVNLLLLGLIVYILV. Residues 408–423 lie on the Cytoplasmic side of the membrane; that stretch reads KKLRCDPHLERIQYRK. The chain crosses the membrane as a helical span at residues 424 to 444; the sequence is AVRGALMLIPVFGVQQLLTIY. At 445 to 480 the chain is on the extracellular side; sequence RFRNVCLIYRLLHKSFCRRMCSEILVITSGEAGSRS.

The protein belongs to the G-protein coupled receptor 2 family. In terms of tissue distribution, present in the head body-wall muscles from the L1 larval stage through to adulthood. Also expressed between L4 and the adult molt in vulval vm1 muscle cells. These cells play a role in opening the vulva during egg laying.

It is found in the cell membrane. In terms of biological role, not known. Putative receptor. This chain is G-protein coupled receptor seb-2, found in Caenorhabditis elegans.